We begin with the raw amino-acid sequence, 147 residues long: Small ribosomal subunit protein uS12 (147 aa).

The protein belongs to the universal ribosomal protein uS12 family. In terms of assembly, part of the 30S ribosomal subunit.

Its function is as follows. With S4 and S5 plays an important role in translational accuracy. Located at the interface of the 30S and 50S subunits. This Pyrobaculum arsenaticum (strain DSM 13514 / JCM 11321 / PZ6) protein is Small ribosomal subunit protein uS12.